A 251-amino-acid polypeptide reads, in one-letter code: Protein PBMUCL2 (251 aa).

The first 22 residues, 1–22, serve as a signal peptide directing secretion; sequence MPRYVPLLLLLLLLRCSERGGG. Disordered regions lie at residues 36–55 and 65–251; these read WRDGVRVPGEGASWDSDRAS and LSQS…THLL. A compositionally biased stretch (basic and acidic residues) spans 72–87; the sequence is KHPETSPKDSRIREND. The N-linked (GlcNAc...) asparagine glycan is linked to asparagine 120. Positions 150–164 are enriched in polar residues; it reads TKDSVTADPGTTENF. Residues 153–251 form a 15 X 11 AA approximate repeats region; it reads SVTADPGTTE…TTKHGDTHLL (99 aa). Positions 241 to 251 are enriched in basic and acidic residues; it reads ETTKHGDTHLL.

In terms of tissue distribution, detected in the brain, lung, spleen, thymus and prostate.

It is found in the secreted. The polypeptide is Protein PBMUCL2 (HCG22) (Homo sapiens (Human)).